We begin with the raw amino-acid sequence, 888 residues long: Inactive deaminase YJL070C (888 aa).

The interval Met1–Pro42 is disordered. Ser9 is subject to Phosphoserine. The segment covering Asn23 to Ser34 has biased composition (basic and acidic residues). Ser41, Ser178, and Ser180 each carry phosphoserine.

It belongs to the metallo-dependent hydrolases superfamily. Adenosine and AMP deaminases family.

This Saccharomyces cerevisiae (strain ATCC 204508 / S288c) (Baker's yeast) protein is Inactive deaminase YJL070C.